A 679-amino-acid polypeptide reads, in one-letter code: Glycine--tRNA ligase beta subunit (679 aa).

Belongs to the class-II aminoacyl-tRNA synthetase family. In terms of assembly, tetramer of two alpha and two beta subunits.

The protein resides in the cytoplasm. The enzyme catalyses tRNA(Gly) + glycine + ATP = glycyl-tRNA(Gly) + AMP + diphosphate. This is Glycine--tRNA ligase beta subunit from Streptococcus equi subsp. zooepidemicus (strain H70).